A 325-amino-acid polypeptide reads, in one-letter code: uncharacterized protein (325 aa).

The transit peptide at 1–69 (MAMMTTTTTT…KNRRVSVTVS (69 aa)) directs the protein to the chloroplast. The residue at position 70 (Ala-70) is an N-acetylalanine.

It belongs to the NAD(P)-dependent epimerase/dehydratase family.

It localises to the plastid. It is found in the chloroplast. This is an uncharacterized protein from Arabidopsis thaliana (Mouse-ear cress).